Consider the following 143-residue polypeptide: Large ribosomal subunit protein uL11 (143 aa).

Belongs to the universal ribosomal protein uL11 family. As to quaternary structure, part of the ribosomal stalk of the 50S ribosomal subunit. Interacts with L10 and the large rRNA to form the base of the stalk. L10 forms an elongated spine to which L12 dimers bind in a sequential fashion forming a multimeric L10(L12)X complex. Post-translationally, one or more lysine residues are methylated.

Functionally, forms part of the ribosomal stalk which helps the ribosome interact with GTP-bound translation factors. This Herminiimonas arsenicoxydans protein is Large ribosomal subunit protein uL11.